Consider the following 140-residue polypeptide: PDZ domain-containing protein 11 (140 aa).

The region spanning 47–129 (TITLKKPPGA…ISMRVRFFPY (83 aa)) is the PDZ domain.

As to quaternary structure, interacts with ATP2B1, ATP2B2, ATP2B3, ATP2B4 and ATP7A. Interacts with PLEKHA7 (via WW domains) at zonula adherens; this interaction is essential for the interaction between PLEKHA7 and the ADAM10-binding protein TSPAN33. Interacts with SLC5A6. In terms of tissue distribution, widely expressed (at protein level).

It is found in the secreted. It localises to the cytoplasm. The protein resides in the cell junction. Its subcellular location is the adherens junction. The protein localises to the cell membrane. Its function is as follows. Mediates docking of ADAM10 to zonula adherens by interacting with PLEKHA7 which is required for PLEKHA7 to interact with the ADAM10-binding protein TSPAN33. This chain is PDZ domain-containing protein 11 (PDZD11), found in Homo sapiens (Human).